A 577-amino-acid polypeptide reads, in one-letter code: Aspartate--tRNA ligase (577 aa).

Glu171 is an L-aspartate binding site. The aspartate stretch occupies residues 195-198 (QLFK). Residue Arg217 coordinates L-aspartate. Residues 217 to 219 (RDE) and Gln226 contribute to the ATP site. His437 is an L-aspartate binding site. Glu472 contributes to the ATP binding site. Arg479 is an L-aspartate binding site. 524–527 (GFDR) is an ATP binding site.

It belongs to the class-II aminoacyl-tRNA synthetase family. Type 1 subfamily. As to quaternary structure, homodimer.

Its subcellular location is the cytoplasm. The enzyme catalyses tRNA(Asp) + L-aspartate + ATP = L-aspartyl-tRNA(Asp) + AMP + diphosphate. Its function is as follows. Catalyzes the attachment of L-aspartate to tRNA(Asp) in a two-step reaction: L-aspartate is first activated by ATP to form Asp-AMP and then transferred to the acceptor end of tRNA(Asp). The sequence is that of Aspartate--tRNA ligase from Deinococcus geothermalis (strain DSM 11300 / CIP 105573 / AG-3a).